Here is a 347-residue protein sequence, read N- to C-terminus: Rhodopsin (347 aa).

Topologically, residues 1-33 (TEGPDFYIPMVNTTGVVRSPYEYPQYYLVNPAA) are extracellular. N-linked (GlcNAc...) asparagine glycosylation occurs at Asn-12. Residues 34 to 58 (YAVLGAYMFFLIIVGFPINFLTLYV) traverse the membrane as a helical segment. Residues 59 to 70 (TLEHKKLRTPLN) are Cytoplasmic-facing. Residues 71–93 (YILLNLAVADLFMVIGGFTTTMY) traverse the membrane as a helical segment. Residues 94-107 (SSMHGYFVLGRLGC) are Extracellular-facing. Cys-107 and Cys-184 are oxidised to a cystine. The helical transmembrane segment at 108 to 130 (NIEGFFATLGGMISLWSLAVLAI) threads the bilayer. A 'Ionic lock' involved in activated form stabilization motif is present at residues 131–133 (ERW). Topologically, residues 131–149 (ERWVVVCKPISNFRFGENH) are cytoplasmic. A helical membrane pass occupies residues 150–170 (AIMGVSLTWVMALACTVPPLV). At 171-199 (GWSRYIPEGMQCACGIDYYTRAEGYNNES) the chain is on the extracellular side. Asn-197 carries an N-linked (GlcNAc...) asparagine glycan. A helical membrane pass occupies residues 200–221 (FVIYMFTFHFLFPMFIIFFCYG). Over 222–249 (RLLCAVKEAAAAQQESETTQRAEREVTR) the chain is Cytoplasmic. A helical membrane pass occupies residues 250-271 (MVILMVIGYLVCWLPYASVAWF). Residues 272 to 283 (IFTHKGSEFGPL) are Extracellular-facing. The chain crosses the membrane as a helical span at residues 284–305 (FMAVPSFFAKSSSIYNPIIYIC). Position 293 is an N6-(retinylidene)lysine (Lys-293). Over 306 to 347 (MNKQFRQCMITTLFCGKNPFEGQEEDSSTKTEASSASSVSPA) the chain is Cytoplasmic. Cys-320 carries S-palmitoyl cysteine lipidation. Residues 326-347 (EGQEEDSSTKTEASSASSVSPA) form a disordered region. Over residues 335–347 (KTEASSASSVSPA) the composition is skewed to low complexity.

It belongs to the G-protein coupled receptor 1 family. Opsin subfamily. Post-translationally, phosphorylated on some or all of the serine and threonine residues present in the C-terminal region. In terms of processing, contains one covalently linked retinal chromophore.

It is found in the membrane. It localises to the cell projection. The protein localises to the cilium. The protein resides in the photoreceptor outer segment. In terms of biological role, photoreceptor required for image-forming vision at low light intensity. While most salt water fish species use retinal as chromophore, most freshwater fish use 3-dehydroretinal, or a mixture of retinal and 3-dehydroretinal. Light-induced isomerization of 11-cis to all-trans retinal triggers a conformational change that activates signaling via G-proteins. Subsequent receptor phosphorylation mediates displacement of the bound G-protein alpha subunit by arrestin and terminates signaling. This chain is Rhodopsin (rho), found in Sargocentron spiniferum (Sabre squirrelfish).